A 296-amino-acid polypeptide reads, in one-letter code: Cytidine deaminase (296 aa).

2 CMP/dCMP-type deaminase domains span residues 52 to 167 (SPVE…YLPD) and 191 to 296 (QGHD…YISL). Position 93–95 (93–95 (NQE)) interacts with substrate. His-106 serves as a coordination point for Zn(2+). Catalysis depends on Glu-108, which acts as the Proton donor. 2 residues coordinate Zn(2+): Cys-133 and Cys-136.

This sequence belongs to the cytidine and deoxycytidylate deaminase family. As to quaternary structure, homodimer. Zn(2+) is required as a cofactor.

The enzyme catalyses cytidine + H2O + H(+) = uridine + NH4(+). It catalyses the reaction 2'-deoxycytidine + H2O + H(+) = 2'-deoxyuridine + NH4(+). Functionally, this enzyme scavenges exogenous and endogenous cytidine and 2'-deoxycytidine for UMP synthesis. This chain is Cytidine deaminase, found in Mannheimia succiniciproducens (strain KCTC 0769BP / MBEL55E).